The chain runs to 453 residues: Cytochrome P450 monooxygenase CYP2 (453 aa).

A helical membrane pass occupies residues 13-29; it reads MVITMLHGSSTYSLLAS. The N-linked (GlcNAc...) asparagine glycan is linked to asparagine 85. Cysteine 397 contacts heme.

The protein belongs to the cytochrome P450 family. Heme is required as a cofactor.

Its subcellular location is the membrane. It functions in the pathway secondary metabolite biosynthesis. Functionally, cytochrome P450 monooxygenase; part of the gene cluster that mediates the biosynthesis of a tyrosine-derived cytochalasan acting as a fungal signal recognized by resistant rice plants and leads to avirulence in Pi33 resistant rice cultivars. The first step in the pathway is catalyzed by the hybrid PKS-NRPS ACE1, assisted by the enoyl reductase RAP1, that are responsible for fusion of the tyrosine precursor and the polyketide backbone. The polyketide synthase module (PKS) of ACE1 is responsible for the synthesis of the polyketide backbone and the downstream nonribosomal peptide synthetase (NRPS) amidates the carboxyl end of the polyketide with the tyrosine precursor. Because ACE1 lacks a designated enoylreductase (ER) domain, the required activity is provided the enoyl reductase RAP1. Reduction by the hydrolyase ORFZ, followed by dehydration and intra-molecular Diels-Alder cyclization by the Diels-Alderase ORF3 then yield the required isoindolone-fused macrocycle. A number of oxidative steps catalyzed by the tailoring enzymes identified within the cluster, including cytochrome P450 monooxygenases CYP1 to CYP4, the FAD-linked oxidoreductase OXR2 and the short-chain dehydrogenase/reductase OXR1, are further required to afford the final cytochalasans that confer avirulence and which have still to be identified. The monooxygenase CYP1 has been shown to be a site-selective C-18 hydroxylase whereas the function of CYP3 is the site-selective epoxidation of the C-6/C-7 olefin that is present in some intermediate compounds. Finally, SYN2 and RAP2 are not required for avirulence in Pi33 resistant rice cultivars. The protein is Cytochrome P450 monooxygenase CYP2 of Pyricularia oryzae (strain 70-15 / ATCC MYA-4617 / FGSC 8958) (Rice blast fungus).